The primary structure comprises 240 residues: tRNA (guanine-N(7)-)-methyltransferase (240 aa).

Positions M1–T10 are enriched in polar residues. Residues M1 to R20 are disordered. S-adenosyl-L-methionine contacts are provided by E70, E95, D122, and D145. The active site involves D145. Substrate contacts are provided by residues K149, D181, and T218–E221.

It belongs to the class I-like SAM-binding methyltransferase superfamily. TrmB family.

It catalyses the reaction guanosine(46) in tRNA + S-adenosyl-L-methionine = N(7)-methylguanosine(46) in tRNA + S-adenosyl-L-homocysteine. The protein operates within tRNA modification; N(7)-methylguanine-tRNA biosynthesis. In terms of biological role, catalyzes the formation of N(7)-methylguanine at position 46 (m7G46) in tRNA. The sequence is that of tRNA (guanine-N(7)-)-methyltransferase from Pseudomonas putida (strain W619).